The sequence spans 443 residues: F-box only protein 39 (443 aa).

In terms of domain architecture, F-box spans 16 to 61; sequence WATLPDVCLRRVFWWLGDRDRSRAALVCRKWNQMMYSADLWRYRTI.

Directly interacts with SKP1 and CUL1.

Substrate-recognition component of the SCF (SKP1-CUL1-F-box protein)-type E3 ubiquitin ligase complex. In Bos taurus (Bovine), this protein is F-box only protein 39 (FBXO39).